The chain runs to 37 residues: Photosystem II reaction center protein T (37 aa).

A helical transmembrane segment spans residues 3–23; sequence ALVYTFLLVSTLGILFFAIFF.

Belongs to the PsbT family. As to quaternary structure, PSII is composed of 1 copy each of membrane proteins PsbA, PsbB, PsbC, PsbD, PsbE, PsbF, PsbH, PsbI, PsbJ, PsbK, PsbL, PsbM, PsbT, PsbY, PsbZ, Psb30/Ycf12, at least 3 peripheral proteins of the oxygen-evolving complex and a large number of cofactors. It forms dimeric complexes.

It localises to the plastid. The protein localises to the chloroplast thylakoid membrane. Its function is as follows. Found at the monomer-monomer interface of the photosystem II (PS II) dimer, plays a role in assembly and dimerization of PSII. PSII is a light-driven water plastoquinone oxidoreductase, using light energy to abstract electrons from H(2)O, generating a proton gradient subsequently used for ATP formation. The sequence is that of Photosystem II reaction center protein T from Ephedra sinica (Chinese ephedra).